The chain runs to 795 residues: Phenylalanine--tRNA ligase beta subunit (795 aa).

Residues 39–148 (AGSFHGVVVG…ADAPIGTDIR (110 aa)) enclose the tRNA-binding domain. A B5 domain is found at 401–476 (PKRATITLRR…RVYGYNNIPD (76 aa)). The Mg(2+) site is built by aspartate 454, aspartate 460, glutamate 463, and glutamate 464. Residues 701–794 (SRFPANRRDI…LKERFQASLR (94 aa)) form the FDX-ACB domain.

Belongs to the phenylalanyl-tRNA synthetase beta subunit family. Type 1 subfamily. In terms of assembly, tetramer of two alpha and two beta subunits. It depends on Mg(2+) as a cofactor.

It localises to the cytoplasm. It catalyses the reaction tRNA(Phe) + L-phenylalanine + ATP = L-phenylalanyl-tRNA(Phe) + AMP + diphosphate + H(+). This chain is Phenylalanine--tRNA ligase beta subunit, found in Shigella dysenteriae serotype 1 (strain Sd197).